Consider the following 175-residue polypeptide: Acireductone dioxygenase (175 aa).

Residues H81, H83, E87, and H126 each contribute to the Fe(2+) site. Residues H81, H83, E87, and H126 each contribute to the Ni(2+) site.

Belongs to the acireductone dioxygenase (ARD) family. The cofactor is Fe(2+). Ni(2+) is required as a cofactor.

The protein resides in the cytoplasm. It is found in the nucleus. The catalysed reaction is 1,2-dihydroxy-5-(methylsulfanyl)pent-1-en-3-one + O2 = 4-methylsulfanyl-2-oxobutanoate + formate + 2 H(+). The enzyme catalyses 1,2-dihydroxy-5-(methylsulfanyl)pent-1-en-3-one + O2 = 3-(methylsulfanyl)propanoate + CO + formate + 2 H(+). It functions in the pathway amino-acid biosynthesis; L-methionine biosynthesis via salvage pathway; L-methionine from S-methyl-5-thio-alpha-D-ribose 1-phosphate: step 5/6. Its function is as follows. Catalyzes 2 different reactions between oxygen and the acireductone 1,2-dihydroxy-3-keto-5-methylthiopentene (DHK-MTPene) depending upon the metal bound in the active site. Fe-containing acireductone dioxygenase (Fe-ARD) produces formate and 2-keto-4-methylthiobutyrate (KMTB), the alpha-ketoacid precursor of methionine in the methionine recycle pathway. Ni-containing acireductone dioxygenase (Ni-ARD) produces methylthiopropionate, carbon monoxide and formate, and does not lie on the methionine recycle pathway. This Phaeosphaeria nodorum (strain SN15 / ATCC MYA-4574 / FGSC 10173) (Glume blotch fungus) protein is Acireductone dioxygenase.